We begin with the raw amino-acid sequence, 324 residues long: Elongation factor P--(R)-beta-lysine ligase (324 aa).

75–77 (SPE) serves as a coordination point for substrate. ATP-binding positions include 99 to 101 (RNE) and asparagine 108. Substrate is bound at residue tyrosine 117. 243 to 244 (EL) lines the ATP pocket. Glutamate 250 lines the substrate pocket. ATP is bound at residue glycine 299.

It belongs to the class-II aminoacyl-tRNA synthetase family. EpmA subfamily. As to quaternary structure, homodimer.

It carries out the reaction D-beta-lysine + L-lysyl-[protein] + ATP = N(6)-((3R)-3,6-diaminohexanoyl)-L-lysyl-[protein] + AMP + diphosphate + H(+). Functionally, with EpmB is involved in the beta-lysylation step of the post-translational modification of translation elongation factor P (EF-P). Catalyzes the ATP-dependent activation of (R)-beta-lysine produced by EpmB, forming a lysyl-adenylate, from which the beta-lysyl moiety is then transferred to the epsilon-amino group of a conserved specific lysine residue in EF-P. This Vibrio cholerae serotype O1 (strain ATCC 39315 / El Tor Inaba N16961) protein is Elongation factor P--(R)-beta-lysine ligase.